The chain runs to 592 residues: Salivary peroxidase/catechol oxidase (592 aa).

An N-terminal signal peptide occupies residues 1 to 21; the sequence is MWMFLKLLLFVCSSWWSCAQA. A disulfide bridge connects residues Cys24 and Cys37. A glycan (N-linked (GlcNAc...) asparagine) is linked at Asn25. His110 functions as the Proton acceptor in the catalytic mechanism. 5 residues coordinate Ca(2+): Asp111, Thr187, Phe189, Asp191, and Ser193. An N-linked (GlcNAc...) asparagine glycan is attached at Asn230. A disulfide bond links Cys235 and Cys244. His353 serves as a coordination point for heme b. Asn366 carries an N-linked (GlcNAc...) asparagine glycan. Cystine bridges form between Cys452-Cys509 and Cys553-Cys580.

It belongs to the peroxidase family. XPO subfamily. Female salivary gland.

Its subcellular location is the secreted. The enzyme catalyses 2 catechol + O2 = 2 1,2-benzoquinone + 2 H2O. Its function is as follows. Inhibits noradrenaline-induced smooth muscle contraction in the host, probably due to the oxidation of noradrenaline, resulting in vasodilation. Exhibits peroxidase activity. This is Salivary peroxidase/catechol oxidase from Anopheles albimanus (New world malaria mosquito).